The chain runs to 1034 residues: Ice nucleation protein InaU (1034 aa).

Residues 162-993 (ATYGSTLSGT…LTAGENSVLI (832 aa)) are octapeptide periodicity. 6 disordered regions span residues 260–287 (YGST…KGSD), 311–342 (TQTA…GYGS), 356–383 (YGST…KGSD), 407–438 (TQTA…GYGS), 452–480 (YGST…GSDL), and 570–597 (AREG…TGYG). Composition is skewed to polar residues over residues 261–286 (GSTQ…QKGS), 311–334 (TQTA…QKGS), 357–382 (GSTQ…QKGS), 407–430 (TQTA…QKGS), 453–480 (GSTQ…GSDL), and 580–592 (YGST…NSDL).

It belongs to the bacterial ice nucleation protein family.

The protein localises to the cell outer membrane. Functionally, ice nucleation proteins enable bacteria to nucleate crystallization in supercooled water. In Pantoea ananas (Erwinia uredovora), this protein is Ice nucleation protein InaU (inaU).